The primary structure comprises 516 residues: Solute carrier family 49 member A3 (516 aa).

Basic and acidic residues predominate over residues 1–10; sequence MAGTMDRLED. Positions 1–22 are disordered; that stretch reads MAGTMDRLEDCNSPETSGTAGD. The next 12 membrane-spanning stretches (helical) occupy residues 34 to 54, 74 to 94, 104 to 124, 139 to 159, 170 to 190, 199 to 219, 253 to 273, 289 to 309, 321 to 341, 344 to 364, 382 to 402, and 425 to 445; these read WVFLLVVSLLSCSNAMLWLSF, WLSLIYFVLSIPFGMAAIWVL, ILGAWLNFSGSVLRAVPCLPV, LCALAQTLVVSSPAKLAALWF, ISTMSNPLGLLIANVLSPALV, MLGIYIGPAALACLLATVCLW, VLLAVCFGGGIGVFSSFSALL, LCGALFIVFGILGALLLGLYV, IGLCLTSMTSVAFALVSQLQG, LALAAICSLFGLFGFSVAPVV, GLIFVLGQAEGMLIMLLLTAL, and VSLLLLAGLCTLFTCVLVIFF. Residues 453-516 are disordered; that stretch reads EAESGGSSSP…EWAETMPRDV (64 aa). The span at 504 to 516 shows a compositional bias: basic and acidic residues; sequence GHSEWAETMPRDV.

This sequence belongs to the major facilitator superfamily.

The protein localises to the membrane. This is Solute carrier family 49 member A3 (Slc49a3) from Mus musculus (Mouse).